Consider the following 108-residue polypeptide: Large ribosomal subunit protein uL24 (108 aa).

Belongs to the universal ribosomal protein uL24 family. Part of the 50S ribosomal subunit.

Functionally, one of two assembly initiator proteins, it binds directly to the 5'-end of the 23S rRNA, where it nucleates assembly of the 50S subunit. In terms of biological role, one of the proteins that surrounds the polypeptide exit tunnel on the outside of the subunit. The chain is Large ribosomal subunit protein uL24 from Mycoplasmopsis synoviae (strain 53) (Mycoplasma synoviae).